Consider the following 73-residue polypeptide: Defensin-like protein 10 (73 aa).

An N-terminal signal peptide occupies residues 1–28 (MKLSLRLISALLMSVMLLFATGMGPVEA). 4 cysteine pairs are disulfide-bonded: cysteine 31–cysteine 73, cysteine 42–cysteine 62, cysteine 48–cysteine 67, and cysteine 52–cysteine 69.

Belongs to the DEFL family.

Its subcellular location is the secreted. Confers broad-spectrum resistance to pathogens. The protein is Defensin-like protein 10 (PDF2.6) of Arabidopsis thaliana (Mouse-ear cress).